The primary structure comprises 932 residues: F-box protein COS111 (932 aa).

The tract at residues 29-63 (VSAKHRPSSTGVYGHDASTVDHASRSNNNLNLTRS) is disordered. The span at 53–63 (RSNNNLNLTRS) shows a compositional bias: low complexity. An F-box domain is found at 146 to 193 (RKEISDLPDEVLRNILSNVKDDQRTLVNCLYVNKAFYNATKPTLYERP). Over residues 346-358 (LSEGKSSDNGNNG) the composition is skewed to polar residues. Disordered stretches follow at residues 346-369 (LSEG…SVSS), 389-450 (TLSG…SNWF), 470-500 (ISSK…TEPF), and 863-893 (SVLP…SNDP). Low complexity-rich tracts occupy residues 395–431 (NNSS…SQID) and 438–447 (TSSKSTSSTS). The span at 876 to 890 (DDTNNGENTIAQPFS) shows a compositional bias: polar residues.

F-box protein probably involved in ubiquitin conjugation pathway. This Candida glabrata (strain ATCC 2001 / BCRC 20586 / JCM 3761 / NBRC 0622 / NRRL Y-65 / CBS 138) (Yeast) protein is F-box protein COS111 (COS111).